The primary structure comprises 152 residues: Erythema protein SVEP (152 aa).

Positions 1–18 (MSITQSFFVLTLAIFGAA) are cleaved as a signal peptide.

Salivary gland (at protein level).

It localises to the secreted. Salivary vasoactive peptide; induces vasodilatation in bioassay with rabbit aortic rings. This Simulium vittatum (Striped black fly) protein is Erythema protein SVEP.